A 274-amino-acid polypeptide reads, in one-letter code: Glutamate--cysteine ligase regulatory subunit (274 aa).

The residue at position 59 (Ser-59) is a Phosphoserine. At Lys-263 the chain carries N6-acetyllysine.

It belongs to the aldo/keto reductase family. Glutamate--cysteine ligase light chain subfamily. In terms of assembly, heterodimer of a catalytic heavy chain and a regulatory light chain. Most abundant in kidney. Also found in liver and testis.

The protein operates within sulfur metabolism; glutathione biosynthesis; glutathione from L-cysteine and L-glutamate: step 1/2. The chain is Glutamate--cysteine ligase regulatory subunit (Gclm) from Rattus norvegicus (Rat).